Reading from the N-terminus, the 892-residue chain is Iodate reductase subunit IdrA (892 aa).

[3Fe-4S] cluster is bound by residues C27, C30, and C34. Gly residues predominate over residues 431-442 (RGGGHQRGGLSA). The interval 431-452 (RGGGHQRGGLSAGGNSEWLSPE) is disordered.

The protein belongs to the prokaryotic molybdopterin-containing oxidoreductase family. As to quaternary structure, the iodate reductase (Idr) complex is composed of a molybdopterin-dependent iodate reductase (IdrA and IdrB subunits) and two associated peroxidases (IdrP1 and IdrP2). [3Fe-4S] cluster is required as a cofactor. The cofactor is Mo-bis(molybdopterin guanine dinucleotide).

It localises to the periplasm. Involved in iodate respiration. Probably catalyzes the reduction of iodate (IO(3)(-)) to hypoiodous acid (HIO) and H(2)O(2), using a reduced cytochrome c as the electron donor. The protein is Iodate reductase subunit IdrA of Pseudomonas sp. (strain SCT).